A 202-amino-acid polypeptide reads, in one-letter code: Glycerol-3-phosphate acyltransferase (202 aa).

Transmembrane regions (helical) follow at residues 2-22 (MIIV…GFVI), 54-74 (FLVT…PLWL), 85-105 (FFTN…YPVY), 120-140 (VVLG…FIIL), 141-161 (KIFK…VIGS), and 162-182 (LIIQ…ILII).

It belongs to the PlsY family. In terms of assembly, probably interacts with PlsX.

It localises to the cell membrane. It catalyses the reaction an acyl phosphate + sn-glycerol 3-phosphate = a 1-acyl-sn-glycero-3-phosphate + phosphate. The protein operates within lipid metabolism; phospholipid metabolism. Catalyzes the transfer of an acyl group from acyl-phosphate (acyl-PO(4)) to glycerol-3-phosphate (G3P) to form lysophosphatidic acid (LPA). This enzyme utilizes acyl-phosphate as fatty acyl donor, but not acyl-CoA or acyl-ACP. This is Glycerol-3-phosphate acyltransferase from Staphylococcus aureus (strain bovine RF122 / ET3-1).